A 763-amino-acid polypeptide reads, in one-letter code: Protein CHROMATIN REMODELING 19 (763 aa).

2 disordered regions span residues 1 to 43 (MKRD…TPSI) and 114 to 149 (EDEEASDDDDDEAESSASEDEFGGGGGGSGGRRGED). Residues 23–34 (VLKRPRTPKKTR) are compositionally biased toward basic residues. Over residues 114-135 (EDEEASDDDDDEAESSASEDEF) the composition is skewed to acidic residues. The region spanning 226 to 404 (LLYKKGIEGA…WSLLEFMLPD (179 aa)) is the Helicase ATP-binding domain. 239-246 (DEMGLGKT) provides a ligand contact to ATP. Residues 353–356 (DEAH) carry the DEAH box motif. A coiled-coil region spans residues 462–482 (RKQEDAYKEAIEEYRAASQAR). The short motif at 520–527 (IRRIYSDE) is the Nuclear localization signal element. The Helicase C-terminal domain maps to 592 to 742 (TLAELLPSMK…AAVLESGVHV (151 aa)).

It belongs to the SNF2/RAD54 helicase family. In terms of assembly, interacts with SUVR2 and itself.

Its subcellular location is the nucleus. Functionally, DNA helicase that possesses intrinsic ATP-dependent nucleosome-remodeling activity and is both required for DNA repair and heterochromatin organization. Promotes DNA end resection of double-strand breaks (DSBs) following DNA damage: probably acts by weakening histone DNA interactions in nucleosomes flanking DSBs. Probable chromatin remodeling factor. Probable helicase-like transcription factor involved in transcriptional gene silencing. Associates with SUVR2 and contributes to transcriptional gene silencing at RNA-directed DNA methylation (RdDM) target loci but also at RdDM-independent target loci. May be involved in nucleosome positioning to form ordered nucleosome arrays on chromatin. The protein is Protein CHROMATIN REMODELING 19 of Arabidopsis thaliana (Mouse-ear cress).